Consider the following 364-residue polypeptide: Aminomethyltransferase (364 aa).

This sequence belongs to the GcvT family. As to quaternary structure, the glycine cleavage system is composed of four proteins: P, T, L and H.

The catalysed reaction is N(6)-[(R)-S(8)-aminomethyldihydrolipoyl]-L-lysyl-[protein] + (6S)-5,6,7,8-tetrahydrofolate = N(6)-[(R)-dihydrolipoyl]-L-lysyl-[protein] + (6R)-5,10-methylene-5,6,7,8-tetrahydrofolate + NH4(+). Functionally, the glycine cleavage system catalyzes the degradation of glycine. The polypeptide is Aminomethyltransferase (Geobacillus sp. (strain WCH70)).